Here is a 228-residue protein sequence, read N- to C-terminus: Mitochondrial assembly of ribosomal large subunit protein 1 (228 aa).

Positions 53-77 (SLTRGLHHGPQPEERTAGDARLQPG) are disordered.

It belongs to the Iojap/RsfS family. As to quaternary structure, associates with the mitochondrial ribosome large subunit (39S) via interaction with MRPL12 and/or MRPL14. The interaction generates steric hindrance that is expected to prevent premature association of the 28S and 39S ribosomal subunits. Identified in a complex composed of MALSU1, MIEF1 upstream open reading frame protein and NDUFAB1; within the trimeric complex, MIEF1 upstream open reading frame protein functions as a bridging scaffold that interacts with MALSU1 on one side, and with NDUFAB1 on the other side. Interacts with MRPL12 and MRPL14.

It is found in the mitochondrion matrix. Required for normal mitochondrial ribosome function and mitochondrial translation. May play a role in ribosome biogenesis by preventing premature association of the 28S and 39S ribosomal subunits. Interacts with mitochondrial ribosomal protein uL14m (MRPL14), probably blocking formation of intersubunit bridge B8, preventing association of the 28S and 39S ribosomal subunits. Addition to isolated mitochondrial ribosomal subunits partially inhibits translation, probably by interfering with the association of the 28S and 39S ribosomal subunits and the formation of functional ribosomes. May also participate in the assembly and/or regulation of the stability of the large subunit of the mitochondrial ribosome. May function as a ribosomal silencing factor. In Mus musculus (Mouse), this protein is Mitochondrial assembly of ribosomal large subunit protein 1 (Malsu1).